Here is a 600-residue protein sequence, read N- to C-terminus: Mitoguardin 1 (600 aa).

The next 2 membrane-spanning stretches (helical) occupy residues 15-32 and 38-58; these read TYAV…YSLS and PVAK…IFLA. Phosphoserine is present on residues Ser-257 and Ser-261.

Belongs to the mitoguardin family. Homodimer and heterodimer; forms heterodimers with MIGA2. Interacts with PLD6/MitoPLD.

It is found in the mitochondrion outer membrane. Functionally, regulator of mitochondrial fusion. Acts by forming homo- and heterodimers at the mitochondrial outer membrane and facilitating the formation of PLD6/MitoPLD dimers. May act by regulating phospholipid metabolism via PLD6/MitoPLD. This Mus musculus (Mouse) protein is Mitoguardin 1.